A 409-amino-acid chain; its full sequence is UPF0261 protein Spro_4740 (409 aa).

This sequence belongs to the UPF0261 family.

This is UPF0261 protein Spro_4740 from Serratia proteamaculans (strain 568).